A 68-amino-acid chain; its full sequence is Peptide Hp1090 (68 aa).

Positions 1 to 23 (MKTQFAIFLITLVLFQMFSQSDA) are cleaved as a signal peptide. Phenylalanine amide is present on F36. Residues 40-68 (GLSDLDDLDESFDGEVSQADIDFLKELMQ) constitute a propeptide that is removed on maturation.

This sequence belongs to the non-disulfide-bridged peptide (NDBP) superfamily. Short antimicrobial peptide (group 4) family. In terms of tissue distribution, expressed by the venom gland.

The protein localises to the secreted. It localises to the target cell membrane. Functionally, amphipathic peptide which inhibits the growth of Gram-positive bacteria. In Heterometrus petersii (Asian forest scorpion), this protein is Peptide Hp1090.